The primary structure comprises 602 residues: Sodium- and chloride-dependent GABA transporter 2 (602 aa).

Residues 1-40 lie on the Cytoplasmic side of the membrane; sequence MDSRVSGTTSNGETKPVCPGLEKAAEDGALQREQWSNKME. Helical transmembrane passes span 41-61, 68-88, and 121-141; these read FLLS…FPYL, GAFF…VFLL, and IVTL…FYLF. Residues 142-206 lie on the Extracellular side of the membrane; it reads SSFTIDLPWG…GIQHLGALRW (65 aa). Cys153 and Cys162 are oxidised to a cystine. Asn169 and Asn173 each carry an N-linked (GlcNAc...) asparagine glycan. A run of 2 helical transmembrane segments spans residues 207–227 and 233–253; these read ELAL…WKGV and VVYF…IRGV. Residue Asn269 is glycosylated (N-linked (GlcNAc...) asparagine). Transmembrane regions (helical) follow at residues 282–302, 319–339, 366–386, 418–438, 453–473, 490–510, and 528–548; these read AGTQ…ALGS, FLNS…LGFM, VVML…VVLL, VLIL…LTEG, GMCL…AYGA, PLIK…TFLF, and WWGD…IPAW. The Cytoplasmic segment spans residues 549 to 602; sequence SCYKLSTLKGSFRERVRQLLCPAKDLPQGHREGPSAPATPRTSLLILTELEPHH. Thr587 is subject to Phosphothreonine. At Ser591 the chain carries Phosphoserine.

This sequence belongs to the sodium:neurotransmitter symporter (SNF) (TC 2.A.22) family. SLC6A13 subfamily.

It localises to the cell membrane. The protein localises to the basolateral cell membrane. It catalyses the reaction 4-aminobutanoate(out) + chloride(out) + 2 Na(+)(out) = 4-aminobutanoate(in) + chloride(in) + 2 Na(+)(in). It carries out the reaction taurine(out) + chloride(out) + 2 Na(+)(out) = taurine(in) + chloride(in) + 2 Na(+)(in). The enzyme catalyses beta-alanine(out) + chloride(out) + 2 Na(+)(out) = beta-alanine(in) + chloride(in) + 2 Na(+)(in). The catalysed reaction is hypotaurine(out) + chloride(out) + 2 Na(+)(out) = hypotaurine(in) + chloride(in) + 2 Na(+)(in). In terms of biological role, mediates sodium- and chloride-dependent transport of gamma-aminobutyric acid (GABA). Can also mediate transport of beta-alanine, taurine and hypotaurine. The sequence is that of Sodium- and chloride-dependent GABA transporter 2 (SLC6A13) from Bos taurus (Bovine).